The chain runs to 161 residues: uncharacterized protein (161 aa).

This is an uncharacterized protein from Mycobacterium bovis (strain ATCC BAA-935 / AF2122/97).